The following is a 254-amino-acid chain: DNA repair protein RecO (254 aa).

It belongs to the RecO family.

In terms of biological role, involved in DNA repair and RecF pathway recombination. The protein is DNA repair protein RecO of Agrobacterium fabrum (strain C58 / ATCC 33970) (Agrobacterium tumefaciens (strain C58)).